A 231-amino-acid polypeptide reads, in one-letter code: 7-cyano-7-deazaguanine synthase (231 aa).

An ATP-binding site is contributed by 8–18; that stretch reads FSGGQDSTTCL. Residues Cys-188, Cys-197, Cys-200, and Cys-203 each contribute to the Zn(2+) site.

The protein belongs to the QueC family. Requires Zn(2+) as cofactor.

The catalysed reaction is 7-carboxy-7-deazaguanine + NH4(+) + ATP = 7-cyano-7-deazaguanine + ADP + phosphate + H2O + H(+). The protein operates within purine metabolism; 7-cyano-7-deazaguanine biosynthesis. Its function is as follows. Catalyzes the ATP-dependent conversion of 7-carboxy-7-deazaguanine (CDG) to 7-cyano-7-deazaguanine (preQ(0)). This chain is 7-cyano-7-deazaguanine synthase, found in Shigella dysenteriae serotype 1 (strain Sd197).